A 483-amino-acid polypeptide reads, in one-letter code: Regulatory protein ViaA (483 aa).

Belongs to the ViaA family. Homodimer. Interacts with RavA.

The protein resides in the cytoplasm. Its function is as follows. Component of the RavA-ViaA chaperone complex, which may act on the membrane to optimize the function of some of the respiratory chains. ViaA stimulates the ATPase activity of RavA. This Escherichia coli O7:K1 (strain IAI39 / ExPEC) protein is Regulatory protein ViaA.